We begin with the raw amino-acid sequence, 409 residues long: uncharacterized protein (409 aa).

Disordered stretches follow at residues 12-32, 133-160, and 194-213; these read ENTE…LHCP, EVST…SREQ, and TVSS…GLST. Over residues 134–160 the composition is skewed to polar residues; it reads VSTQKSWSSEKNWSGLSQGPGTASREQ.

This is an uncharacterized protein from Mus musculus (Mouse).